The primary structure comprises 171 residues: Phosphopantetheine adenylyltransferase (171 aa).

Threonine 9 provides a ligand contact to substrate. Residues 9–10 (TF) and histidine 17 each bind ATP. Residues lysine 41, leucine 78, and arginine 92 each contribute to the substrate site. ATP contacts are provided by residues 93-95 (GLR), glutamate 103, and 128-134 (HQAIASK).

The protein belongs to the bacterial CoaD family. In terms of assembly, homohexamer. Requires Mg(2+) as cofactor.

It is found in the cytoplasm. It carries out the reaction (R)-4'-phosphopantetheine + ATP + H(+) = 3'-dephospho-CoA + diphosphate. The protein operates within cofactor biosynthesis; coenzyme A biosynthesis; CoA from (R)-pantothenate: step 4/5. Functionally, reversibly transfers an adenylyl group from ATP to 4'-phosphopantetheine, yielding dephospho-CoA (dPCoA) and pyrophosphate. This chain is Phosphopantetheine adenylyltransferase, found in Dinoroseobacter shibae (strain DSM 16493 / NCIMB 14021 / DFL 12).